The primary structure comprises 792 residues: Ribosome biogenesis protein BOP1 homolog (792 aa).

Positions 1–11 are enriched in basic residues; the sequence is MTKKRTVKRKV. The interval 1 to 167 is disordered; the sequence is MTKKRTVKRK…ESDTSDEEDI (167 aa). 4 stretches are compositionally biased toward acidic residues: residues 44 to 53, 60 to 72, 82 to 117, and 157 to 166; these read EDTTDDEGID, SSEDLEFESDEEG, EAEEGEDDQDEDDDEDEDEGEDEDDDSDDDSEESDA, and EESDTSDEED. WD repeat units follow at residues 453–494, 496–534, 578–620, 623–661, 664–703, 707–746, and 762–792; these read GHTD…RTIE, NDVVRCVAWCPNAKLSIIAVATGSRLLLINPKVGDKLLI, THFK…SQIP, KSKGLIQCVLFHPVKPCFFVATQHNIRIYDLVKQELIKK, TNSKWISGMSIHPKGDNLLVSTYDKKMLWFDLDLSTKPYQ, LHRNAVRSVAFHLRYPLFASGSDDQAVIVSHGMVYNDLLQ, and RDEFGVLDVTWHPVQPWVFSTGADCTIRLYT.

It belongs to the WD repeat BOP1/ERB1 family.

The protein resides in the nucleus. Its subcellular location is the nucleolus. It localises to the nucleoplasm. Required for maturation of ribosomal RNAs and formation of the large ribosomal subunit. The protein is Ribosome biogenesis protein BOP1 homolog of Drosophila mojavensis (Fruit fly).